The following is a 506-amino-acid chain: Probable cytosol aminopeptidase (506 aa).

The Mn(2+) site is built by lysine 278 and aspartate 283. Lysine 290 is a catalytic residue. Aspartate 301, aspartate 360, and glutamate 362 together coordinate Mn(2+). Residue arginine 364 is part of the active site.

The protein belongs to the peptidase M17 family. Mn(2+) serves as cofactor.

It is found in the cytoplasm. It catalyses the reaction Release of an N-terminal amino acid, Xaa-|-Yaa-, in which Xaa is preferably Leu, but may be other amino acids including Pro although not Arg or Lys, and Yaa may be Pro. Amino acid amides and methyl esters are also readily hydrolyzed, but rates on arylamides are exceedingly low.. The catalysed reaction is Release of an N-terminal amino acid, preferentially leucine, but not glutamic or aspartic acids.. Presumably involved in the processing and regular turnover of intracellular proteins. Catalyzes the removal of unsubstituted N-terminal amino acids from various peptides. The sequence is that of Probable cytosol aminopeptidase from Ralstonia nicotianae (strain ATCC BAA-1114 / GMI1000) (Ralstonia solanacearum).